The primary structure comprises 299 residues: Taste receptor type 2 member 5 (299 aa).

Position 1 (M1) is a topological domain, extracellular. A helical membrane pass occupies residues 2–22; it reads LSAGLGLLMLVAVVEFLIGLI. At 23–45 the chain is on the cytoplasmic side; the sequence is GNGVLVVWSFREWIRKFSWSSYN. The helical transmembrane segment at 46–66 threads the bilayer; it reads LIILGLAGCRFVLQWLIILDL. Over 67–82 the chain is Extracellular; the sequence is SLFPLFQSSRWLRYLS. Residues 83-103 form a helical membrane-spanning segment; that stretch reads IFWVLVSQASLWFATFLSVFY. Residues 104–127 are Cytoplasmic-facing; that stretch reads CKKITTFDHPAYLWLKQRAYNLSL. Residues 128 to 148 traverse the membrane as a helical segment; it reads WCLLGYFIINLLLTVQIGLMF. Residues 149 to 175 lie on the Extracellular side of the membrane; that stretch reads YHPPQGNSSIRYPFESWQYLYAFRLNS. N155 carries an N-linked (GlcNAc...) asparagine glycan. A helical transmembrane segment spans residues 176–196; it reads GSYLPLMVFLVSSGMLIVSLY. The Cytoplasmic segment spans residues 197 to 223; sequence THHKKMKVHSAGRRDVRAKAHITALKS. A helical membrane pass occupies residues 224–244; that stretch reads LGCFLLLHLVYIMASPFSIAS. The Extracellular portion of the chain corresponds to 245-253; the sequence is KTYPPDLTS. Residues 254–274 traverse the membrane as a helical segment; the sequence is VFIWETLMAAYPSLHSLILIM. Topologically, residues 275–299 are cytoplasmic; that stretch reads GIPRVKQTCQKILWKTVCARRCWGP.

The protein belongs to the G-protein coupled receptor T2R family.

Its subcellular location is the membrane. Receptor that may play a role in the perception of bitterness and is gustducin-linked. May play a role in sensing the chemical composition of the gastrointestinal content. The activity of this receptor may stimulate alpha gustducin, mediate PLC-beta-2 activation and lead to the gating of TRPM5. This chain is Taste receptor type 2 member 5 (TAS2R5), found in Pan paniscus (Pygmy chimpanzee).